The primary structure comprises 120 residues: SPbeta prophage-derived DSR anti-defense 1 (120 aa).

It belongs to the DSR anti-defense 1 family. As to quaternary structure, interacts with Bacillus subtilis DSR2 (via C-terminus) in a 2:4 ratio; this interaction leads to the absence of activation of the NADase defense activity of DSR2.

Functionally, counteracts the defense-associated sirtuin 2 (DSR2) defense system of the host. Inhibits the NADase activity of host DSR2 by competing with the tail tube protein that normally activates DSR2. The polypeptide is SPbeta prophage-derived DSR anti-defense 1 (yotI) (Bacillus subtilis (strain 168)).